A 396-amino-acid chain; its full sequence is Putative F-box protein At4g22660 (396 aa).

Residues 7–58 (PNTWSDLPLDLLNLVFKRLSFANFRQAKSVCSSWYSASKQSVPKNQIPWLML) enclose the F-box domain.

This Arabidopsis thaliana (Mouse-ear cress) protein is Putative F-box protein At4g22660.